A 150-amino-acid polypeptide reads, in one-letter code: Putative solute carrier family 19 member 4 (150 aa).

The interval 118–137 (PSVREGACNEKSTENKKPQD) is disordered. The span at 124-136 (ACNEKSTENKKPQ) shows a compositional bias: basic and acidic residues.

The protein belongs to the reduced folate carrier (RFC) transporter (TC 2.A.48) family.

This chain is Putative solute carrier family 19 member 4, found in Homo sapiens (Human).